We begin with the raw amino-acid sequence, 121 residues long: Putative iron-sulfur cluster insertion protein ErpA (121 aa).

3 residues coordinate iron-sulfur cluster: Cys-49, Cys-113, and Cys-115.

The protein belongs to the HesB/IscA family. In terms of assembly, homodimer. The cofactor is iron-sulfur cluster.

Its function is as follows. Required for insertion of 4Fe-4S clusters. This chain is Putative iron-sulfur cluster insertion protein ErpA, found in Paraburkholderia phymatum (strain DSM 17167 / CIP 108236 / LMG 21445 / STM815) (Burkholderia phymatum).